Consider the following 534-residue polypeptide: CTP synthase (534 aa).

The interval Met1–Leu265 is amidoligase domain. Ser12 contacts CTP. Ser12 contributes to the UTP binding site. Gly13–Ile18 is an ATP binding site. Tyr53 serves as a coordination point for L-glutamine. Asp70 serves as a coordination point for ATP. Residues Asp70 and Glu140 each coordinate Mg(2+). CTP is bound by residues Asp147 to Glu149, Lys186 to Gln191, and Lys222. UTP is bound by residues Lys186–Gln191 and Lys222. The 242-residue stretch at Asn289 to Glu530 folds into the Glutamine amidotransferase type-1 domain. Residue Gly352 participates in L-glutamine binding. The Nucleophile; for glutamine hydrolysis role is filled by Cys379. Residues Leu380–Gln383, Glu403, and Arg460 each bind L-glutamine. Catalysis depends on residues His503 and Glu505.

The protein belongs to the CTP synthase family. Homotetramer.

The enzyme catalyses UTP + L-glutamine + ATP + H2O = CTP + L-glutamate + ADP + phosphate + 2 H(+). The catalysed reaction is L-glutamine + H2O = L-glutamate + NH4(+). It catalyses the reaction UTP + NH4(+) + ATP = CTP + ADP + phosphate + 2 H(+). It functions in the pathway pyrimidine metabolism; CTP biosynthesis via de novo pathway; CTP from UDP: step 2/2. Allosterically activated by GTP, when glutamine is the substrate; GTP has no effect on the reaction when ammonia is the substrate. The allosteric effector GTP functions by stabilizing the protein conformation that binds the tetrahedral intermediate(s) formed during glutamine hydrolysis. Inhibited by the product CTP, via allosteric rather than competitive inhibition. Functionally, catalyzes the ATP-dependent amination of UTP to CTP with either L-glutamine or ammonia as the source of nitrogen. Regulates intracellular CTP levels through interactions with the four ribonucleotide triphosphates. The chain is CTP synthase from Methanococcoides burtonii (strain DSM 6242 / NBRC 107633 / OCM 468 / ACE-M).